Consider the following 145-residue polypeptide: Bacilliredoxin SAR1592 (145 aa).

This sequence belongs to the bacilliredoxin family.

In Staphylococcus aureus (strain MRSA252), this protein is Bacilliredoxin SAR1592.